Reading from the N-terminus, the 183-residue chain is Non-specific lipid transfer protein GPI-anchored 15 (183 aa).

Residues 1 to 24 (MGYRRSYAITFVALVAALWSVTKA) form the signal peptide. Disulfide bonds link Cys-30–Cys-71, Cys-40–Cys-55, Cys-56–Cys-97, and Cys-69–Cys-107. N-linked (GlcNAc...) asparagine glycans are attached at residues Asn-47 and Asn-86. Positions 108 to 158 (NAATGPTAQPPAPSPTEKTPDVTLTPTSLPGARSGVGGGSKTVPSVGTGSS) are disordered. Over residues 149 to 158 (TVPSVGTGSS) the composition is skewed to polar residues. The GPI-anchor amidated serine moiety is linked to residue Ser-158. Positions 159-183 (SRNVDPLPLHFLMFAVLVVCTSSFL) are cleaved as a propeptide — removed in mature form.

This sequence belongs to the plant LTP family. As to expression, expressed in seedlings, preferentially in the endodermis of hypocotyls and roots. Also observed in siliques.

The protein localises to the cell membrane. Probable lipid transfer protein. This is Non-specific lipid transfer protein GPI-anchored 15 from Arabidopsis thaliana (Mouse-ear cress).